The chain runs to 342 residues: Organic solute transporter alpha-like protein 2 (342 aa).

Residues 1 to 50 (MLEISPWETLVKLLTDSLLNCTGTHEDVPHAKTFLRSLTTTYIASLAVAT) lie on the Extracellular side of the membrane. Asn20 carries an N-linked (GlcNAc...) asparagine glycan. A helical membrane pass occupies residues 51-71 (AVTVGTVCLAVLHLIYIHFYI). The Cytoplasmic segment spans residues 72 to 79 (THSSRRLH). The chain crosses the membrane as a helical span at residues 80 to 100 (IVLLACTAPLVSLLALVAMYM). The Extracellular portion of the chain corresponds to 101–109 (PRVWFLSHL). The helical transmembrane segment at 110 to 130 (LSFLYFSFALWVIICLLLHIF) threads the bilayer. At 131-176 (DGHHALVTKMMQRLQYVEIATPPFCCLFPCLPKVRLEGKKIRWCEL) the chain is on the cytoplasmic side. The chain crosses the membrane as a helical span at residues 177 to 197 (MVMQAPIVRLFATLVSLVIYF). The Extracellular segment spans residues 198 to 208 (EYQDQGLVPLK). The helical transmembrane segment at 209–229 (VLDFITLPSLLAGIYGTHILV) threads the bilayer. The Cytoplasmic segment spans residues 230-243 (TTVSRMDELISYRY). A helical membrane pass occupies residues 244 to 264 (VVVFRLLDFFFMVFGLQQPVF). Topologically, residues 265–290 (DFLARYGAFGCGTVLPAIETSFYWKN) are extracellular. Residues 291 to 311 (FFTVIEAFCVTLISTVLLQPS) form a helical membrane-spanning segment. Residues 312 to 342 (KSSFFDKHPSCRSMSSARSTITDVDTDESTT) are Cytoplasmic-facing.

It belongs to the OST-alpha family.

It is found in the cell membrane. Functionally, probable transporter. The protein is Organic solute transporter alpha-like protein 2 (osta-2) of Caenorhabditis elegans.